Consider the following 74-residue polypeptide: UPF0435 protein BCB4264_A0471 (74 aa).

This sequence belongs to the UPF0435 family.

This Bacillus cereus (strain B4264) protein is UPF0435 protein BCB4264_A0471.